Here is a 389-residue protein sequence, read N- to C-terminus: Odorant receptor 85c (389 aa).

Topologically, residues 1–33 are cytoplasmic; that stretch reads MKFMKYAVFFYTSVGIEPYTIDSRSKKASLWSH. A helical transmembrane segment spans residues 34-54; that stretch reads LLFWANVINLSVIVFGEILYL. At 55–66 the chain is on the extracellular side; it reads GVAYSDGKFIDA. Residues 67-87 form a helical membrane-spanning segment; the sequence is VTVLSYIGFVIVGMSKMFFIW. Over 88-130 the chain is Cytoplasmic; the sequence is WKKTDLSDLVKELEHIYPNGKAEEEMYRLDRYLRSCSRISITY. The helical transmembrane segment at 131 to 151 threads the bilayer; the sequence is ALLYSVLIWTFNLFSIMQFLV. Topologically, residues 152 to 199 are extracellular; the sequence is YEKLLKIRVVGQTLPYLMYFPWNWHENWTYYVLLFCQNFAGHTSASGQ. N-linked (GlcNAc...) asparagine glycosylation is present at N178. Residues 200 to 220 form a helical membrane-spanning segment; that stretch reads ISTDLLLCAVATQVVMHFDYL. Topologically, residues 221–259 are cytoplasmic; sequence ARVVEKQVLDRDWSENSRFLAKTVQYHQRILRLMDVLND. The helical transmembrane segment at 260 to 280 threads the bilayer; it reads IFGIPLLLNFMVSTFVICFVG. Residues 281–290 are Extracellular-facing; the sequence is FQMTVGVPPD. A helical transmembrane segment spans residues 291–311; that stretch reads IMIKLFLFLFSSLSQVYLICH. Residues 312 to 359 lie on the Cytoplasmic side of the membrane; it reads YGQLIADASSSLSISAYKQNWQNADIRYRRALVFFIARPQRTTYLKAT. The helical transmembrane segment at 360 to 380 threads the bilayer; sequence IFMNITRATMTDLLQVSYKFF. Residues 381-389 lie on the Extracellular side of the membrane; it reads ALLRTMYIK.

This sequence belongs to the insect chemoreceptor superfamily. Heteromeric odorant receptor channel (TC 1.A.69) family. Or49a subfamily. In terms of assembly, interacts with Orco. Complexes exist early in the endomembrane system in olfactory sensory neurons (OSNs), coupling these complexes to the conserved ciliary trafficking pathway.

It is found in the cell membrane. Odorant receptor which mediates acceptance or avoidance behavior, depending on its substrates. The odorant receptor repertoire encodes a large collection of odor stimuli that vary widely in identity, intensity, and duration. May form a complex with Orco to form odorant-sensing units, providing sensitive and prolonged odorant signaling and calcium permeability. The protein is Odorant receptor 85c (Or85c) of Drosophila melanogaster (Fruit fly).